The following is a 62-amino-acid chain: U10-hottentoxin-Hj2a (62 aa).

Positions 1–22 are cleaved as a signal peptide; that stretch reads MQKLLIILILFCILKFNVDVEG. Cystine bridges form between Cys28/Cys46, Cys33/Cys59, and Cys37/Cys61.

The protein belongs to the short scorpion toxin superfamily. Potassium channel inhibitor family. Alpha-KTx 23 subfamily. Expressed by the venom gland.

It is found in the secreted. Its function is as follows. May block potassium channels. This chain is U10-hottentoxin-Hj2a, found in Hottentotta judaicus (Black scorpion).